A 135-amino-acid chain; its full sequence is Helix-loop-helix protein 2 (135 aa).

Residues 1–81 (MMLSPDQAAD…RRATAKYRSA (81 aa)) are disordered. Residues 10–21 (DSDHPSSTHSDP) show a composition bias toward basic and acidic residues. Residues 68–81 (KRRRRRATAKYRSA) are compositionally biased toward basic residues. A bHLH domain is found at 77 to 129 (KYRSAHATRERIRVEAFNLAFAELRKLLPTLPPDKKLSKIEILRLAICYISYL).

Homodimer. Interacts and may form heterodimers with STAT3. Expressed in developing neurons. Transiently expressed in the cerebellum during postnatal development, exclusively in the premigratory zone of the external granule layer where postmitotic neurons undergo initial stages of neuronal differentiation. Expression is not detected in mature neurons. Expressed in the anterior lobe of the adult pituitary.

The protein resides in the nucleus. Its function is as follows. Transcription factor which binds the E box motif 5'-CA[TC][AG]TG-3'. Involved in regulating energy expenditure, body mass, voluntary physical activity, mating behavior and reproductive longevity, acting through the hypothalamic-pituitary-gonadal axis. Acts as a transcriptional activator of target genes, including Ndn, Pcsk1, Mc4r. Is also a transcriptional activator of KISS1. May act centrally to regulate function of both white and brown adipose tissue. Together with NHLH1, required to maintain migration and survival of cells in the anterior extramural migration stream (aes), which forms the precerebellar nuclei. Also, in concert with Nhlh1, may determine fate of gonadotropin releasing hormone-1 (GnRH-1) neurons. This is Helix-loop-helix protein 2 (Nhlh2) from Mus musculus (Mouse).